Consider the following 545-residue polypeptide: MTELTQQASWQALEKHSKSLPHMRELFSTEPERFGNMSTQACGLFLDYSKNRASQETMSLLFNLAKDSQLESKIKAMFAGHVINNTEQRAVLHTALRAPADKVINVDGNNIVAEVQQTLAKMGEFVESLTSGQWKGYTGKTITDVVSIGIGGSFLGPKIVSQALRPYWTGELNCHFVANVDGTSITEKLKGLDPQTTLFVMSSKSFGTQETLTNTLTAKEWFLSQGASQSDVAKHFVAVSSNVSKATEFGIDANNIFPMWDWVGGRYSLWSAIGLPIALLIGMDNFRQLLAGAHEMDEHFANTPLESNMPVIMGMFSLWYGNFFNAQSHVVLTYDHYLRGLPAYFQQLDMESNGKSVTLNGTDVDYSTGPIIWGGEGTNGQHAYHQLLHQGTALIPADFIMPLNSHNPVGEHHVQLASNCFGQTQALMQGRTFDEALAELNQSGLAEEQKLLIAKHKVMPGNKPSNTILMDKLTPSTLGSLIALYEHRTFVQGAIWQINSFDQWGVELGKQLGNDVLERLVADTEAKELDSSSNGLINLFKQGKI.

The active-site Proton donor is E351. Catalysis depends on residues H382 and K510.

It belongs to the GPI family.

Its subcellular location is the cytoplasm. The catalysed reaction is alpha-D-glucose 6-phosphate = beta-D-fructose 6-phosphate. Its pathway is carbohydrate biosynthesis; gluconeogenesis. It functions in the pathway carbohydrate degradation; glycolysis; D-glyceraldehyde 3-phosphate and glycerone phosphate from D-glucose: step 2/4. In terms of biological role, catalyzes the reversible isomerization of glucose-6-phosphate to fructose-6-phosphate. The protein is Glucose-6-phosphate isomerase of Shewanella pealeana (strain ATCC 700345 / ANG-SQ1).